The sequence spans 113 residues: Ribulose bisphosphate carboxylase small subunit (113 aa).

It belongs to the RuBisCO small chain family. In terms of assembly, heterohexadecamer of 8 large and 8 small subunits. Forms a CsoS2-CsoS1-RuBisCO complex.

The protein localises to the carboxysome. In terms of biological role, ruBisCO catalyzes two reactions: the carboxylation of D-ribulose 1,5-bisphosphate, the primary event in carbon dioxide fixation, as well as the oxidative fragmentation of the pentose substrate in the photorespiration process. Both reactions occur simultaneously and in competition at the same active site. Although the small subunit is not catalytic it is essential for maximal activity. There are estimated to be 152 RuBisCO holoenzymes per carboxysome. The protein is Ribulose bisphosphate carboxylase small subunit of Prochlorococcus marinus subsp. pastoris (strain CCMP1986 / NIES-2087 / MED4).